A 795-amino-acid polypeptide reads, in one-letter code: Multiple C2 domain and transmembrane region protein 12 (795 aa).

3 consecutive C2 domains span residues 24–142, 180–298, and 341–463; these read RNPR…PQWY, VCAS…SAPA, and YSSD…TCSY. Positions 57, 109, and 113 each coordinate Ca(2+). 4 consecutive transmembrane segments (helical) span residues 590–610, 612–632, 730–750, and 752–772; these read CTPK…EYYI, WLVT…VILL, FVLI…CLGW, and LHVR…LPWF.

This sequence belongs to the MCTP family. It depends on Ca(2+) as a cofactor. As to expression, expressed in root vascular tissues and meristems. Observed in flowers.

It localises to the endoplasmic reticulum membrane. May function as a signaling molecule by regulating the trafficking of other regulators. The sequence is that of Multiple C2 domain and transmembrane region protein 12 from Arabidopsis thaliana (Mouse-ear cress).